The sequence spans 192 residues: Thymidine kinase (192 aa).

ATP contacts are provided by residues 9 to 16 and 87 to 90; these read SAMNAGKS and DECQ. The Proton acceptor role is filled by Glu-88. Zn(2+)-binding residues include Cys-145, Cys-147, Cys-182, and His-185.

Belongs to the thymidine kinase family. In terms of assembly, homotetramer.

It is found in the cytoplasm. The enzyme catalyses thymidine + ATP = dTMP + ADP + H(+). The protein is Thymidine kinase of Vibrio vulnificus (strain CMCP6).